The primary structure comprises 297 residues: Malonyl-[acyl-carrier protein] O-methyltransferase (297 aa).

It belongs to the methyltransferase superfamily.

It catalyses the reaction malonyl-[ACP] + S-adenosyl-L-methionine = malonyl-[ACP] methyl ester + S-adenosyl-L-homocysteine. The protein operates within cofactor biosynthesis; biotin biosynthesis. Its function is as follows. Converts the free carboxyl group of a malonyl-thioester to its methyl ester by transfer of a methyl group from S-adenosyl-L-methionine (SAM). It allows to synthesize pimeloyl-ACP via the fatty acid synthetic pathway. The protein is Malonyl-[acyl-carrier protein] O-methyltransferase of Laribacter hongkongensis (strain HLHK9).